A 412-amino-acid polypeptide reads, in one-letter code: NFATC2-interacting protein (412 aa).

Positions 1-38 (MAEPLRGRGPRSRGGRGARRARGARGRCPRARQSPARL) are disordered. Residues 8–30 (RGPRSRGGRGARRARGARGRCPR) show a composition bias toward basic residues. A phosphoserine mark is found at Ser49, Ser51, Ser79, Ser81, and Ser83. Residues 58–115 (VADPVEVPVARLPAPAKPEQDSDSDSEGAAEGPAGAPRTLVRRRRRRLLDPGEAPVVP) are disordered. Positions 86–96 (AAEGPAGAPRT) are enriched in low complexity. Ser118 is modified (phosphoserine). Lys120 participates in a covalent cross-link: Glycyl lysine isopeptide (Lys-Gly) (interchain with G-Cter in SUMO2). Residues 136 to 206 (KLCPSEPEDE…SSRNKSRKHT (71 aa)) are disordered. Positions 168–227 (RKKLRKKCEKEEKKMEEFPDQDISPLPQPSSRNKSRKHTEALQKLREVNKRLQDLRSCLS) form a coiled coil. A compositionally biased stretch (basic and acidic residues) spans 175-184 (CEKEEKKMEE). 3 positions are modified to phosphoserine: Ser191, Ser197, and Ser307. Thr309 and Thr311 each carry phosphothreonine. The region spanning 341 to 412 (LRLRVQGKEK…ESGDLIEVWG (72 aa)) is the Ubiquitin-like domain. 2 positions are modified to phosphoserine: Ser362 and Ser383.

As to quaternary structure, interacts with NFATC2, TRAF1, TRAF2 and PRMT1. Interacts with UBE2I/UBC9. In terms of processing, methylation at the N-terminus by PRMT1 modulates interaction with the NFAT complex and results in augmented cytokine production. As to expression, highest level detected in spleen, thymus and testis.

The protein localises to the nucleus. It is found in the cytoplasm. In T-helper 2 (Th2) cells, regulates the magnitude of NFAT-driven transcription of a specific subset of cytokine genes, including IL3, IL4, IL5 and IL13, but not IL2. Recruits PRMT1 to the IL4 promoter; this leads to enhancement of histone H4 'Arg-3'-methylation and facilitates subsequent histone acetylation at the IL4 locus, thus promotes robust cytokine expression. Down-regulates formation of poly-SUMO chains by UBE2I/UBC9. The chain is NFATC2-interacting protein (Nfatc2ip) from Mus musculus (Mouse).